The primary structure comprises 366 residues: G-protein coupled receptor 183 (366 aa).

Residues 1–37 are Extracellular-facing; that stretch reads MQVMRTFNQPPTSSHPTPTLNDSDTCITLYNHRGYAR. Asn-21 carries an N-linked (GlcNAc...) asparagine glycan. Residues 38 to 63 form a helical membrane-spanning segment; that stretch reads VLMPLFYCIVFFVGLLGNALAFHIIR. The Cytoplasmic segment spans residues 64–83; that stretch reads PNVKKINSTTLYSANLVISD. Residues 84–101 form a helical membrane-spanning segment; it reads ILFTLSLPLRIIYYALGF. Topologically, residues 102 to 111 are extracellular; sequence HWPLGETLCK. Cysteines 110 and 188 form a disulfide. Residues 112–133 traverse the membrane as a helical segment; the sequence is IVGLIFYINTYAGVNFMTCLSV. The Cytoplasmic portion of the chain corresponds to 134-155; the sequence is DRFIAVVLPLRFARFRKVSNVR. The helical transmembrane segment at 156 to 174 threads the bilayer; it reads YICVGVWLLVLMQTLPLLS. Residues 175 to 199 are Extracellular-facing; it reads MPMTNEEPDGFITCMEYPNFEPVPN. Residues 200–222 traverse the membrane as a helical segment; sequence ISYILIGAVFLGYGVPVVTILVC. Residues 223 to 248 lie on the Cytoplasmic side of the membrane; that stretch reads YSILCCKLRLAAKANQLTDKSGRSQK. The helical transmembrane segment at 249–272 threads the bilayer; sequence AIGVICCVSLVFVVCFSPYHIDLL. At 273–292 the chain is on the extracellular side; it reads QYMIRKLIYTPDCAELTAFQ. Residues 293-317 traverse the membrane as a helical segment; sequence ISLHFTVCLMNLNSCLDPFIYFFAC. Residues 318–366 are Cytoplasmic-facing; it reads KGYKTKVLKILKRQVSVSFSSAARTLPEGLSRDISDGNKIHLNSTRHKE.

It belongs to the G-protein coupled receptor 1 family.

It is found in the cell membrane. Its function is as follows. G-protein coupled receptor expressed in lymphocytes that acts as a chemotactic receptor for B-cells, T-cells, splenic dendritic cells, monocytes/macrophages and astrocytes. Receptor for oxysterol 7-alpha,25-dihydroxycholesterol (7-alpha,25-OHC) and other related oxysterols. Mediates cell positioning and movement of a number of cells by binding the 7-alpha,25-OHC ligand that forms a chemotactic gradient. Binding of 7-alpha,25-OHC mediates the correct localization of B-cells during humoral immune responses. This is G-protein coupled receptor 183 (gpr183) from Salmo salar (Atlantic salmon).